The following is a 167-amino-acid chain: Small ribosomal subunit protein uS3m (167 aa).

Residues 1 to 35 (MAASVCSGLLGPRVLSWSRELPCAWRALHTSPVCA) constitute a mitochondrion transit peptide.

This sequence belongs to the universal ribosomal protein uS3 family. Component of the mitochondrial small ribosomal subunit (mt-SSU). Mature mammalian 55S mitochondrial ribosomes consist of a small (28S) and a large (39S) subunit. The 28S small subunit contains a 12S ribosomal RNA (12S mt-rRNA) and 30 different proteins. The 39S large subunit contains a 16S rRNA (16S mt-rRNA), a copy of mitochondrial valine transfer RNA (mt-tRNA(Val)), which plays an integral structural role, and 52 different proteins.

It is found in the mitochondrion. This Homo sapiens (Human) protein is Small ribosomal subunit protein uS3m (MRPS24).